Reading from the N-terminus, the 190-residue chain is Endo-1,4-beta-xylanase (190 aa).

One can recognise a GH11 domain in the interval 1 to 190 (QTIGPGTGYS…SSGSASITVS (190 aa)). The active-site Nucleophile is glutamate 86. Residue glutamate 177 is the Proton donor of the active site.

The protein belongs to the glycosyl hydrolase 11 (cellulase G) family.

The catalysed reaction is Endohydrolysis of (1-&gt;4)-beta-D-xylosidic linkages in xylans.. Its pathway is glycan degradation; xylan degradation. The chain is Endo-1,4-beta-xylanase from Trichoderma harzianum (Hypocrea lixii).